Here is a 415-residue protein sequence, read N- to C-terminus: Multidrug resistance protein MdtA (415 aa).

Residues 1-21 (MKGSYKSRWVIVIVVVIAAIA) form the signal peptide. Disordered regions lie at residues 32 to 60 (SRSA…GPLA) and 392 to 415 (EAQS…GARS). Residues 399–415 (PEEKATSREYAKKGARS) are compositionally biased toward basic and acidic residues.

The protein belongs to the membrane fusion protein (MFP) (TC 8.A.1) family. In terms of assembly, part of a tripartite efflux system composed of MdtA, MdtB and MdtC.

It localises to the cell inner membrane. Functionally, the MdtABC tripartite complex confers resistance against novobiocin and deoxycholate. This is Multidrug resistance protein MdtA from Escherichia coli (strain K12 / MC4100 / BW2952).